Here is a 352-residue protein sequence, read N- to C-terminus: Fe(3+) ions import ATP-binding protein FbpC (352 aa).

Positions 5–239 (LHIGHLSKSF…PADLDAVLFI (235 aa)) constitute an ABC transporter domain. 37–44 (GASGCGKT) contributes to the ATP binding site.

The protein belongs to the ABC transporter superfamily. Fe(3+) ion importer (TC 3.A.1.10) family. In terms of assembly, the complex is composed of two ATP-binding proteins (FbpC), two transmembrane proteins (FbpB) and a solute-binding protein (FbpA).

The protein resides in the cell inner membrane. It carries out the reaction Fe(3+)(out) + ATP + H2O = Fe(3+)(in) + ADP + phosphate + H(+). In terms of biological role, part of the ABC transporter complex FbpABC involved in Fe(3+) ions import. Responsible for energy coupling to the transport system. The protein is Fe(3+) ions import ATP-binding protein FbpC of Neisseria gonorrhoeae.